Here is a 550-residue protein sequence, read N- to C-terminus: Cell pattern formation-associated protein STUA (550 aa).

The HTH APSES-type domain occupies 86–192 (RVTATLWEDE…HNIGALLYHP (107 aa)). A DNA-binding region (H-T-H motif) is located at residues 120 to 141 (GTKLLNVAGMTRGRRDGILKSE). Residues 246–266 (SLANGPQSLASTPQPLTNGSQ) show a composition bias toward polar residues. 4 disordered regions span residues 246–277 (SLANGPQSLASTPQPLTNGSQPPMPNGGGMLK), 371–412 (HHQP…VKRR), 447–467 (KRRDDEAETPRPGPNVHDHLN), and 527–550 (APVYDTGARPPSAISAPRRQQSFG). Residues 385 to 395 (RGRDEDDDVHR) show a composition bias toward basic and acidic residues. The tract at residues 517-546 (TVAASPSYPSAPVYDTGARPPSAISAPRRQ) is nuclear localization domain.

Belongs to the EFG1/PHD1/stuA family.

It localises to the nucleus. Functionally, transcription factor that regulates asexual reproduction. Binds the StuA-response elements (StRE) with the consensus sequence 5'-(A/T)CGCG(T/A)N(A/C)-3' at the promoters of target genes. Differentially regulates the development of macroconidia, microconidia, and chlamydospores. Acts as a positive regulator for the development of macroconidia and as a negative regulator for the development of chlamydospores. Involved in microconidium formation specifically in infected plants. In Fusarium oxysporum (Fusarium vascular wilt), this protein is Cell pattern formation-associated protein STUA.